Consider the following 199-residue polypeptide: Molybdenum cofactor guanylyltransferase (199 aa).

Residues Leu12 to Gly14, Lys25, Asn53, Asp71, and Asp101 each bind GTP. Asp101 contacts Mg(2+).

It belongs to the MobA family. As to quaternary structure, monomer. Mg(2+) serves as cofactor.

The protein resides in the cytoplasm. The enzyme catalyses Mo-molybdopterin + GTP + H(+) = Mo-molybdopterin guanine dinucleotide + diphosphate. Functionally, transfers a GMP moiety from GTP to Mo-molybdopterin (Mo-MPT) cofactor (Moco or molybdenum cofactor) to form Mo-molybdopterin guanine dinucleotide (Mo-MGD) cofactor. The polypeptide is Molybdenum cofactor guanylyltransferase (Cupriavidus necator (strain ATCC 17699 / DSM 428 / KCTC 22496 / NCIMB 10442 / H16 / Stanier 337) (Ralstonia eutropha)).